Consider the following 472-residue polypeptide: 3-isopropylmalate dehydratase large subunit (472 aa).

Cysteine 347, cysteine 407, and cysteine 410 together coordinate [4Fe-4S] cluster.

The protein belongs to the aconitase/IPM isomerase family. LeuC type 1 subfamily. Heterodimer of LeuC and LeuD. [4Fe-4S] cluster is required as a cofactor.

It catalyses the reaction (2R,3S)-3-isopropylmalate = (2S)-2-isopropylmalate. It participates in amino-acid biosynthesis; L-leucine biosynthesis; L-leucine from 3-methyl-2-oxobutanoate: step 2/4. Catalyzes the isomerization between 2-isopropylmalate and 3-isopropylmalate, via the formation of 2-isopropylmaleate. This chain is 3-isopropylmalate dehydratase large subunit, found in Synechococcus sp. (strain CC9902).